Here is a 116-residue protein sequence, read N- to C-terminus: Protein Rev (116 aa).

Phosphoserine; by host CK2 is present on residues S5 and S8. The homomultimerization stretch occupies residues 18 to 26; that stretch reads YIKILYQSN. The tract at residues 26 to 48 is disordered; that stretch reads NPYPKPEGTRQARRNRRRRWRAR. The Nuclear localization signal and RNA-binding (RRE) motif lies at 34 to 50; it reads TRQARRNRRRRWRARQR. The span at 36 to 48 shows a compositional bias: basic residues; the sequence is QARRNRRRRWRAR. A Nuclear export signal and binding to XPO1 motif is present at residues 73-84; the sequence is LQLPPLERLHIN. Residues 89 to 116 are disordered; it reads CGQGAEEGVGSSQISGESHTVLGSGTKE. Positions 98–116 are enriched in polar residues; the sequence is GSSQISGESHTVLGSGTKE. A Phosphoserine; by host modification is found at S99.

It belongs to the HIV-1 REV protein family. In terms of assembly, homomultimer; when bound to the RRE. Multimeric assembly is essential for activity and may involve XPO1. Binds to human KPNB1, XPO1, TNPO1, RANBP5 and IPO7. Interacts with the viral Integrase. Interacts with human KHDRBS1. Interacts with human NAP1; this interaction decreases Rev multimerization and stimulates its activity. Interacts with human DEAD-box helicases DDX3 and DDX24; these interactions may serve for viral RNA export to the cytoplasm and packaging, respectively. Interacts with human PSIP1; this interaction may inhibit HIV-1 DNA integration by promoting dissociation of the Integrase-LEDGF/p75 complex. Post-translationally, asymmetrically arginine dimethylated at one site by host PRMT6. Methylation impairs the RNA-binding activity and export of viral RNA from the nucleus to the cytoplasm. Phosphorylated by protein kinase CK2. Presence of, and maybe binding to the N-terminus of the regulatory beta subunit of CK2 is necessary for CK2-mediated Rev's phosphorylation.

It is found in the host nucleus. It localises to the host nucleolus. Its subcellular location is the host cytoplasm. Functionally, escorts unspliced or incompletely spliced viral pre-mRNAs (late transcripts) out of the nucleus of infected cells. These pre-mRNAs carry a recognition sequence called Rev responsive element (RRE) located in the env gene, that is not present in fully spliced viral mRNAs (early transcripts). This function is essential since most viral proteins are translated from unspliced or partially spliced pre-mRNAs which cannot exit the nucleus by the pathway used by fully processed cellular mRNAs. Rev itself is translated from a fully spliced mRNA that readily exits the nucleus. Rev's nuclear localization signal (NLS) binds directly to KPNB1/Importin beta-1 without previous binding to KPNA1/Importin alpha-1. KPNB1 binds to the GDP bound form of RAN (Ran-GDP) and targets Rev to the nucleus. In the nucleus, the conversion from Ran-GDP to Ran-GTP dissociates Rev from KPNB1 and allows Rev's binding to the RRE in viral pre-mRNAs. Rev multimerization on the RRE via cooperative assembly exposes its nuclear export signal (NES) to the surface. Rev can then form a complex with XPO1/CRM1 and Ran-GTP, leading to nuclear export of the complex. Conversion from Ran-GTP to Ran-GDP mediates dissociation of the Rev/RRE/XPO1/RAN complex, so that Rev can return to the nucleus for a subsequent round of export. Beside KPNB1, also seems to interact with TNPO1/Transportin-1, RANBP5/IPO5 and IPO7/RANBP7 for nuclear import. The nucleoporin-like HRB/RIP is an essential cofactor that probably indirectly interacts with Rev to release HIV RNAs from the perinuclear region to the cytoplasm. This is Protein Rev from Homo sapiens (Human).